The primary structure comprises 148 residues: Small ribosomal subunit protein bS16 (148 aa).

Residues 111–122 (AAAGEEPVAEAT) show a composition bias toward low complexity. Residues 111 to 148 (AAAGEEPVAEATTPKKKGGKKAEAEDKAEEQKSEEGQA) are disordered. Residues 130-148 (KKAEAEDKAEEQKSEEGQA) are compositionally biased toward basic and acidic residues.

The protein belongs to the bacterial ribosomal protein bS16 family.

This Saccharopolyspora erythraea (strain ATCC 11635 / DSM 40517 / JCM 4748 / NBRC 13426 / NCIMB 8594 / NRRL 2338) protein is Small ribosomal subunit protein bS16.